Here is a 725-residue protein sequence, read N- to C-terminus: Prolyl 3-hydroxylase 1 (725 aa).

A signal peptide spans 1-14; it reads MALLLPLLPLLVWA. The TPR 1 repeat unit spans residues 36 to 69; sequence PDALFAAGAEAYARGDWPAVVLQMERALRARAAI. N-linked (GlcNAc...) asparagine glycosylation is present at asparagine 82. TPR repeat units follow at residues 136–169, 198–231, and 294–327; these read RSPY…NPEH, HMTE…YFVA, and PSHF…FPND. A coiled-coil region spans residues 394 to 441; the sequence is KRLREKQKVERETAARISEEIGNLMKEIETLVEEKAKESAEMSKFIRE. 2 N-linked (GlcNAc...) asparagine glycosylation sites follow: asparagine 460 and asparagine 533. The region spanning 557 to 671 is the Fe2OG dioxygenase domain; sequence SHLVCRTAID…RCAIALWFTL (115 aa). Fe cation contacts are provided by histidine 580, aspartate 582, and histidine 652. Arginine 662 is a catalytic residue. Over residues 701–715 the composition is skewed to polar residues; that stretch reads ETSAEQEPTAATSTA. Residues 701–725 form a disordered region; sequence ETSAEQEPTAATSTAGLHAAGKDEL. The short motif at 722–725 is the Prevents secretion from ER element; it reads KDEL.

This sequence belongs to the leprecan family. In terms of assembly, binds unfolded collagen in a complex with CYPB and CRTAP. Fe cation is required as a cofactor. The cofactor is L-ascorbate. As to expression, expressed in embryonic dermis, tendon, cartilage, liver and kidney. Expression in the kidney is restricted to the calyx. In the liver, expression is restricted to the interlobular septum.

The protein resides in the endoplasmic reticulum. The catalysed reaction is L-prolyl-[collagen] + 2-oxoglutarate + O2 = trans-3-hydroxy-L-prolyl-[collagen] + succinate + CO2. In terms of biological role, has prolyl 3-hydroxylase activity catalyzing the post-translational formation of 3-hydroxyproline in -Xaa-Pro-Gly-sequences in collagens, especially types IV and V. May be involved in the secretoty pathway of cells. Has growth suppressive activity in fibroblasts. This Gallus gallus (Chicken) protein is Prolyl 3-hydroxylase 1.